We begin with the raw amino-acid sequence, 98 residues long: NADH-ubiquinone oxidoreductase chain 4L (98 aa).

The next 3 helical transmembrane spans lie at 1-21 (MSMV…GLLI), 29-49 (SLLC…VTIL), and 61-81 (IILL…LVMV).

The protein belongs to the complex I subunit 4L family. Core subunit of respiratory chain NADH dehydrogenase (Complex I) which is composed of 45 different subunits.

Its subcellular location is the mitochondrion inner membrane. The catalysed reaction is a ubiquinone + NADH + 5 H(+)(in) = a ubiquinol + NAD(+) + 4 H(+)(out). Functionally, core subunit of the mitochondrial membrane respiratory chain NADH dehydrogenase (Complex I) which catalyzes electron transfer from NADH through the respiratory chain, using ubiquinone as an electron acceptor. Part of the enzyme membrane arm which is embedded in the lipid bilayer and involved in proton translocation. The sequence is that of NADH-ubiquinone oxidoreductase chain 4L (MT-ND4L) from Taxidea taxus (American badger).